The sequence spans 99 residues: Small ribosomal subunit protein uS14 (99 aa).

Belongs to the universal ribosomal protein uS14 family. Part of the 30S ribosomal subunit. Contacts proteins S3 and S10.

Binds 16S rRNA, required for the assembly of 30S particles and may also be responsible for determining the conformation of the 16S rRNA at the A site. The protein is Small ribosomal subunit protein uS14 of Bacteroides fragilis (strain ATCC 25285 / DSM 2151 / CCUG 4856 / JCM 11019 / LMG 10263 / NCTC 9343 / Onslow / VPI 2553 / EN-2).